Here is a 359-residue protein sequence, read N- to C-terminus: tRNA/tmRNA (uracil-C(5))-methyltransferase (359 aa).

S-adenosyl-L-methionine is bound by residues glutamine 183, tyrosine 211, asparagine 216, glutamate 232, and aspartate 292. The active-site Nucleophile is cysteine 317. The Proton acceptor role is filled by glutamate 351.

This sequence belongs to the class I-like SAM-binding methyltransferase superfamily. RNA M5U methyltransferase family. TrmA subfamily.

It carries out the reaction uridine(54) in tRNA + S-adenosyl-L-methionine = 5-methyluridine(54) in tRNA + S-adenosyl-L-homocysteine + H(+). The catalysed reaction is uridine(341) in tmRNA + S-adenosyl-L-methionine = 5-methyluridine(341) in tmRNA + S-adenosyl-L-homocysteine + H(+). Dual-specificity methyltransferase that catalyzes the formation of 5-methyluridine at position 54 (m5U54) in all tRNAs, and that of position 341 (m5U341) in tmRNA (transfer-mRNA). This chain is tRNA/tmRNA (uracil-C(5))-methyltransferase, found in Pseudomonas fluorescens (strain SBW25).